Reading from the N-terminus, the 144-residue chain is Large ribosomal subunit protein uL16 (144 aa).

Positions 1-19 (MLLPKRVKYRRQHRPKTTG) are enriched in basic residues. The tract at residues 1-23 (MLLPKRVKYRRQHRPKTTGRSKG) is disordered.

The protein belongs to the universal ribosomal protein uL16 family. Part of the 50S ribosomal subunit.

Binds 23S rRNA and is also seen to make contacts with the A and possibly P site tRNAs. The sequence is that of Large ribosomal subunit protein uL16 from Staphylococcus carnosus (strain TM300).